Here is a 30-residue protein sequence, read N- to C-terminus: Thylakoid lumenal 17 kDa protein (30 aa).

Its subcellular location is the plastid. The protein resides in the chloroplast thylakoid lumen. In Spinacia oleracea (Spinach), this protein is Thylakoid lumenal 17 kDa protein.